A 79-amino-acid polypeptide reads, in one-letter code: uncharacterized protein (79 aa).

This is an uncharacterized protein from Acidianus two-tailed virus (ATV).